The sequence spans 435 residues: Adenylosuccinate synthetase (435 aa).

Residues 11-17 and 39-41 each bind GTP; these read GDEGKGK and GHT. Aspartate 12 serves as the catalytic Proton acceptor. Residues aspartate 12 and glycine 39 each contribute to the Mg(2+) site. Residues 12–15, 37–40, threonine 128, arginine 142, glutamine 223, threonine 238, and arginine 302 each bind IMP; these read DEGK and NAGH. Histidine 40 functions as the Proton donor in the catalytic mechanism. A substrate-binding site is contributed by 298-304; sequence SVTGRPR. GTP contacts are provided by residues arginine 304, 330–332, and 412–414; these read KLD and STG.

This sequence belongs to the adenylosuccinate synthetase family. Homodimer. It depends on Mg(2+) as a cofactor.

Its subcellular location is the cytoplasm. The catalysed reaction is IMP + L-aspartate + GTP = N(6)-(1,2-dicarboxyethyl)-AMP + GDP + phosphate + 2 H(+). Its pathway is purine metabolism; AMP biosynthesis via de novo pathway; AMP from IMP: step 1/2. In terms of biological role, plays an important role in the de novo pathway of purine nucleotide biosynthesis. Catalyzes the first committed step in the biosynthesis of AMP from IMP. The protein is Adenylosuccinate synthetase of Coxiella burnetii (strain RSA 493 / Nine Mile phase I).